A 169-amino-acid chain; its full sequence is Cell division inhibitor SulA (169 aa).

The ftsZ binding stretch occupies residues 106 to 112; sequence ALRTGNY. The tract at residues 162–169 is lon protease binding; the sequence is KIHSNLYH.

It belongs to the SulA family. In terms of assembly, interacts with FtsZ. Is rapidly cleaved and degraded by the Lon protease once DNA damage is repaired.

Component of the SOS system and an inhibitor of cell division. Accumulation of SulA causes rapid cessation of cell division and the appearance of long, non-septate filaments. In the presence of GTP, binds a polymerization-competent form of FtsZ in a 1:1 ratio, thus inhibiting FtsZ polymerization and therefore preventing it from participating in the assembly of the Z ring. This mechanism prevents the premature segregation of damaged DNA to daughter cells during cell division. This is Cell division inhibitor SulA from Salmonella choleraesuis (strain SC-B67).